Here is a 262-residue protein sequence, read N- to C-terminus: tRNA pseudouridine synthase A (262 aa).

Residue D51 is the Nucleophile of the active site. Y109 contributes to the substrate binding site.

It belongs to the tRNA pseudouridine synthase TruA family. Homodimer.

The catalysed reaction is uridine(38/39/40) in tRNA = pseudouridine(38/39/40) in tRNA. Formation of pseudouridine at positions 38, 39 and 40 in the anticodon stem and loop of transfer RNAs. This is tRNA pseudouridine synthase A from Actinobacillus pleuropneumoniae serotype 7 (strain AP76).